A 239-amino-acid polypeptide reads, in one-letter code: Leucine rich adaptor protein 1 (239 aa).

2 LRR repeats span residues 55 to 83 and 93 to 114; these read LGDKIMALKMELAYLRAIDVKILQQLVTL and LLEERGTLTSHCSSLTSSQYSL. The span at 107 to 116 shows a compositional bias: low complexity; sequence LTSSQYSLTG. 2 disordered regions span residues 107–139 and 200–219; these read LTSSQYSLTGGSPGRSRRGSWDSLPDTSTTDRL and KPPGERLQGGPPESPEDESA. 4 positions are modified to phosphoserine: Ser-118, Ser-126, Ser-129, and Ser-213.

Forms a tripartite complex with CDC42BPA/CDC42BPB and MYO18A acting as an adapter connecting both. Its binding to CDC42BPA/CDC42BPB results in their activation by abolition of their negative autoregulation. Interacts with CDC42BPA and CDC42BPB.

The protein localises to the cytoplasm. Its function is as follows. Acts as an activator of the canonical NF-kappa-B pathway and drive the production of pro-inflammatory cytokines. Promotes the antigen (Ag)-presenting and priming function of dendritic cells via the canonical NF-kappa-B pathway. In concert with MYO18A and CDC42BPA/CDC42BPB, is involved in modulating lamellar actomyosin retrograde flow that is crucial to cell protrusion and migration. Activates CDC42BPA/CDC42BPB and targets it to actomyosin through its interaction with MYO18A, leading to MYL9/MLC2 phosphorylation and MYH9/MYH10-dependent actomyosin assembly in the lamella. This chain is Leucine rich adaptor protein 1 (LURAP1), found in Homo sapiens (Human).